The chain runs to 838 residues: E3 ubiquitin-protein ligase RNF19A (838 aa).

The tract at residues 41-61 is disordered; that stretch reads DRDLQSSASSVSLPSVKKAPK. Positions 46–57 are enriched in low complexity; sequence SSASSVSLPSVK. The TRIAD supradomain stretch occupies residues 128 to 351; it reads DFIECPLCLL…LSPSGCTFWG (224 aa). Zn(2+) is bound by residues cysteine 132, cysteine 135, cysteine 150, histidine 152, cysteine 155, cysteine 158, cysteine 176, cysteine 179, cysteine 219, cysteine 224, cysteine 241, cysteine 246, cysteine 251, cysteine 254, histidine 259, cysteine 264, cysteine 301, and cysteine 304. The RING-type 1 zinc finger occupies 132–179; sequence CPLCLLRHSKDRFPDIMTCHHRSCVDCLRQYLRIEISESRVNISCPEC. The IBR-type zinc finger occupies 199 to 264; the sequence is EKYEEFMLRR…KQIWHPNQTC (66 aa). The RING-type 2; atypical zinc-finger motif lies at 301 to 332; it reads CPRCAAYIIKMNDGSCNHMTCAVCGCEFCWLC. Cysteine 316 is an active-site residue. The Zn(2+) site is built by cysteine 321, cysteine 324, cysteine 329, cysteine 332, histidine 340, and cysteine 347. The next 2 membrane-spanning stretches (helical) occupy residues 368 to 388 and 424 to 444; these read LVGA…AMII and VIVS…IMLA. Disordered stretches follow at residues 622–685 and 700–721; these read SKPS…GNMK and QQST…PSVA. A compositionally biased stretch (polar residues) spans 630-662; the sequence is NSGSSSVDDGSATRSHAGGSSSGLPEGKSSATK. Position 631 is a phosphoserine (serine 631). Positions 660-838 are interaction with CASR; the sequence is ATKWSKEATA…ELKVAIQTEI (179 aa). Basic residues predominate over residues 671-683; sequence KKSKSGKLRKKGN. A compositionally biased stretch (polar residues) spans 700–717; sequence QQSTNSSEFEAPSLSDSM.

The protein belongs to the RBR family. RNF19 subfamily. As to quaternary structure, interacts with UBE2L3 and UBE2L6. Interacts with transcription factor Sp1. Interacts with VCP, CASR, SNCAIP and with some SOD1 variants which cause amyotrophic lateral sclerosis, but not with wild-type SOD1. In terms of tissue distribution, widely expressed, with highest levels in heart. Ubiquitously expressed in the central nervous system.

The protein resides in the membrane. It is found in the cytoplasm. The protein localises to the cytoskeleton. It localises to the microtubule organizing center. Its subcellular location is the centrosome. It catalyses the reaction [E2 ubiquitin-conjugating enzyme]-S-ubiquitinyl-L-cysteine + [acceptor protein]-L-lysine = [E2 ubiquitin-conjugating enzyme]-L-cysteine + [acceptor protein]-N(6)-ubiquitinyl-L-lysine.. Its pathway is protein modification; protein ubiquitination. Functionally, E3 ubiquitin-protein ligase which accepts ubiquitin from E2 ubiquitin-conjugating enzymes UBE2L3 and UBE2L6 in the form of a thioester and then directly transfers the ubiquitin to targeted substrates, such as SNCAIP or CASR. Specifically ubiquitinates pathogenic SOD1 variants, which leads to their proteasomal degradation and to neuronal protection. The protein is E3 ubiquitin-protein ligase RNF19A (RNF19A) of Homo sapiens (Human).